Consider the following 455-residue polypeptide: Ribosomal protein uS12 methylthiotransferase RimO (455 aa).

The MTTase N-terminal domain occupies 21–131; the sequence is GKVGFISLGC…VVGAVHQYVP (111 aa). Residues cysteine 30, cysteine 66, cysteine 95, cysteine 164, cysteine 168, and cysteine 171 each contribute to the [4Fe-4S] cluster site. The Radical SAM core domain occupies 150 to 387; sequence LTPRHYAYLK…MAKQAEISAA (238 aa). The TRAM domain occupies 390-455; sequence QAKIGRTIDV…DEHDLWARLI (66 aa).

The protein belongs to the methylthiotransferase family. RimO subfamily. It depends on [4Fe-4S] cluster as a cofactor.

The protein localises to the cytoplasm. It catalyses the reaction L-aspartate(89)-[ribosomal protein uS12]-hydrogen + (sulfur carrier)-SH + AH2 + 2 S-adenosyl-L-methionine = 3-methylsulfanyl-L-aspartate(89)-[ribosomal protein uS12]-hydrogen + (sulfur carrier)-H + 5'-deoxyadenosine + L-methionine + A + S-adenosyl-L-homocysteine + 2 H(+). Catalyzes the methylthiolation of an aspartic acid residue of ribosomal protein uS12. The chain is Ribosomal protein uS12 methylthiotransferase RimO from Marinobacter nauticus (strain ATCC 700491 / DSM 11845 / VT8) (Marinobacter aquaeolei).